The primary structure comprises 1002 residues: Vacuolar protein sorting-associated protein 18 homolog (1002 aa).

The residue at position 344 (serine 344) is a Phosphoserine. The stretch at 650–804 (LMAQGSRLEV…DIKGTNDVKK (155 aa)) is one CHCR repeat. The stretch at 827-880 (FEKIDNFKEAICDALRDYNQRIQELQREMAETTEQTDRVTAELQQLRQHSLTVE) forms a coiled coil. The RING-type; degenerate zinc finger occupies 885–924 (CEICEMMLLVKPFFIFICGHKFHSDCLEKHVVPLLTKEQC).

The protein belongs to the VPS18 family. In terms of assembly, component of the class C core vacuole/endosome tethering (CORVET) complex composed of at least Vps8, dor/Vps18, car/Vps33A and Vps16A; unlike in other species, Vps11 is not part of the Drosophila complex. Due to the reduced number of components the Drosophila CORVET complex is often referred to as the miniCORVET complex. Interacts with car/Vps33A. Interacts with ema. Component of the homotypic fusion and vacuole protein sorting (HOPS) complex, composed of Vps16A, car/Vps33A, dor/Vps18, Vps39, Vps11 and lt/Vps41. The tethering complex core made up of Vps16A, car/Vps33A and dor/Vps18 and shared by both HOPS and CORVET, preferentially associates with CORVET-specific Vps8 over HOPS-specific lt/Vps41. Interacts with Syx17 (via SNARE domain); the interaction may involve multiple components of the HOPS complex and may promote assembly of the Syx17-Snap29-Vamp7 trans-SNARE complex.

The protein resides in the early endosome. It localises to the late endosome membrane. It is found in the lysosome membrane. Its subcellular location is the cytoplasmic vesicle. The protein localises to the autophagosome. Its function is as follows. Core component of the class C core vacuole/endosome tethering (CORVET) and the homotypic fusion and vacuole protein sorting (HOPS) tethering complexes involved in endo-lysosomal vesicle trafficking and lysosome biogenesis. The CORVET complex facilitates docking and fusion of endosomal vesicles during endosome maturation, acts upstream of HOPS, but is not involved in autophagic flux. The CORVET complex may cooperate with the early endosomal tether Rbsn-5 to mediate endosomal fusion. The HOPS complex facilitates docking and fusion of lysosomes with late endosomes and several other types of vesicles. The HOPS complex is also involved in autophagy and crinophagy (the elimination of unused secretory granules through their fusion with lysosomes). The HOPS complex mediates autophagocitic flux, probably by binding autophagosome-associated Syx17/syntaxin 17, promoting assembly of the trans-SNARE complex and instigating autophagosome-lysosome fusion. Independent of Syx17/syntaxin 17, HOPS is involved in biosynthetic transport to lysosomes and lysosome-related organelles such as eye-pigment granules. Required for endocytic degradation of boss/bride of sevenless and N/Notch in developing ommatidia. Required for autophagocytosis-dependent remodeling of myofibrils and transverse-tubules (T-tubules) during metamorphosis. In larval neuromuscular junctions, essential for endosomal sorting that traffics old or dysfunctional synaptic vesicle proteins through a degradative endolysosomal route. Required to maintain normal levels of rush, which functions in endosome formation and trafficking. This is Vacuolar protein sorting-associated protein 18 homolog from Drosophila melanogaster (Fruit fly).